A 157-amino-acid chain; its full sequence is SsrA-binding protein (157 aa).

It belongs to the SmpB family.

Its subcellular location is the cytoplasm. Required for rescue of stalled ribosomes mediated by trans-translation. Binds to transfer-messenger RNA (tmRNA), required for stable association of tmRNA with ribosomes. tmRNA and SmpB together mimic tRNA shape, replacing the anticodon stem-loop with SmpB. tmRNA is encoded by the ssrA gene; the 2 termini fold to resemble tRNA(Ala) and it encodes a 'tag peptide', a short internal open reading frame. During trans-translation Ala-aminoacylated tmRNA acts like a tRNA, entering the A-site of stalled ribosomes, displacing the stalled mRNA. The ribosome then switches to translate the ORF on the tmRNA; the nascent peptide is terminated with the 'tag peptide' encoded by the tmRNA and targeted for degradation. The ribosome is freed to recommence translation, which seems to be the essential function of trans-translation. This is SsrA-binding protein from Christiangramia forsetii (strain DSM 17595 / CGMCC 1.15422 / KT0803) (Gramella forsetii).